Here is a 406-residue protein sequence, read N- to C-terminus: Tryptophan synthase beta chain (406 aa).

The residue at position 95 (K95) is an N6-(pyridoxal phosphate)lysine.

The protein belongs to the TrpB family. Tetramer of two alpha and two beta chains. Requires pyridoxal 5'-phosphate as cofactor.

The enzyme catalyses (1S,2R)-1-C-(indol-3-yl)glycerol 3-phosphate + L-serine = D-glyceraldehyde 3-phosphate + L-tryptophan + H2O. Its pathway is amino-acid biosynthesis; L-tryptophan biosynthesis; L-tryptophan from chorismate: step 5/5. In terms of biological role, the beta subunit is responsible for the synthesis of L-tryptophan from indole and L-serine. This is Tryptophan synthase beta chain from Pseudomonas fluorescens (strain ATCC BAA-477 / NRRL B-23932 / Pf-5).